The primary structure comprises 440 residues: Transposon Ty1-NL2 Gag polyprotein (440 aa).

Polar residues-rich tracts occupy residues 1–23 (MESQ…SVTS), 48–60 (TKAN…TPAS), 71–97 (SPQT…NQAN), and 129–152 (QFPQ…GNTF). 3 disordered regions span residues 1 to 97 (MESQ…NQAN), 129 to 171 (QFPQ…YVRP), and 352 to 440 (GSRN…PETY). Low complexity predominate over residues 153–165 (TDSSSADSDMTST). The interval 299-401 (NNGIHINNKV…NSKSKTARAH (103 aa)) is RNA-binding. Residues 402-418 (NVSTSNNSPSTDNDSIS) show a composition bias toward low complexity. At serine 416 the chain carries Phosphoserine. Residues 419–428 (KSTTEPIQLN) are compositionally biased toward polar residues. Positions 429–440 (NKHDLHLRPETY) are enriched in basic and acidic residues.

In terms of assembly, homotrimer.

The protein resides in the cytoplasm. Functionally, capsid protein (CA) is the structural component of the virus-like particle (VLP), forming the shell that encapsulates the retrotransposons dimeric RNA genome. The particles are assembled from trimer-clustered units and there are holes in the capsid shells that allow for the diffusion of macromolecules. CA also has nucleocapsid-like chaperone activity, promoting primer tRNA(i)-Met annealing to the multipartite primer-binding site (PBS), dimerization of Ty1 RNA and initiation of reverse transcription. This Saccharomyces cerevisiae (strain ATCC 204508 / S288c) (Baker's yeast) protein is Transposon Ty1-NL2 Gag polyprotein (TY1A-NL2).